Reading from the N-terminus, the 364-residue chain is Molybdenum import ATP-binding protein ModC (364 aa).

The 229-residue stretch at 1–229 folds into the ABC transporter domain; it reads MLLIDIKKQL…PLMRPWLNAS (229 aa). 31-38 lines the ATP pocket; the sequence is GRSGAGKS. Residues 293–360 enclose the Mop domain; the sequence is HSSIRNILPV…IKGVSVTQSD (68 aa).

This sequence belongs to the ABC transporter superfamily. Molybdate importer (TC 3.A.1.8) family. As to quaternary structure, the complex is composed of two ATP-binding proteins (ModC), two transmembrane proteins (ModB) and a solute-binding protein (ModA).

The protein localises to the cell inner membrane. It carries out the reaction molybdate(out) + ATP + H2O = molybdate(in) + ADP + phosphate + H(+). Functionally, part of the ABC transporter complex ModABC involved in molybdenum import. Responsible for energy coupling to the transport system. The chain is Molybdenum import ATP-binding protein ModC from Aliivibrio fischeri (strain ATCC 700601 / ES114) (Vibrio fischeri).